Here is a 226-residue protein sequence, read N- to C-terminus: Cytidylate kinase (226 aa).

10 to 18 (GPAGAGKST) is an ATP binding site.

Belongs to the cytidylate kinase family. Type 1 subfamily.

The protein resides in the cytoplasm. It carries out the reaction CMP + ATP = CDP + ADP. The catalysed reaction is dCMP + ATP = dCDP + ADP. The protein is Cytidylate kinase of Caldicellulosiruptor saccharolyticus (strain ATCC 43494 / DSM 8903 / Tp8T 6331).